The sequence spans 1067 residues: Ubiquitin conjugation factor E4 A (1067 aa).

Residues 33-57 (KEQLKQQSDELPASPDDSDNSVSES) are disordered. The residue at position 386 (Lys-386) is an N6-acetyllysine. In terms of domain architecture, U-box spans 987–1061 (DACDEFLDPI…QRWLAERKQQ (75 aa)).

It belongs to the ubiquitin conjugation factor E4 family.

It localises to the cytoplasm. It carries out the reaction S-ubiquitinyl-[E2 ubiquitin-conjugating enzyme]-L-cysteine + [acceptor protein]-L-lysine = [E2 ubiquitin-conjugating enzyme]-L-cysteine + N(6)-ubiquitinyl-[acceptor protein]-L-lysine.. The protein operates within protein modification; protein ubiquitination. Functionally, ubiquitin-protein ligase that probably functions as an E3 ligase in conjunction with specific E1 and E2 ligases. May also function as an E4 ligase mediating the assembly of polyubiquitin chains on substrates ubiquitinated by another E3 ubiquitin ligase. Mediates 'Lys-48'-linked polyubiquitination of substrates. The polypeptide is Ubiquitin conjugation factor E4 A (Bos taurus (Bovine)).